Consider the following 540-residue polypeptide: Upstream-binding protein 1 (540 aa).

Phosphoserine is present on Ser-22. The Grh/CP2 DB domain maps to 60 to 296 (EHPPFQYVMC…EQKKSSKRTL (237 aa)). Disordered stretches follow at residues 236-270 (KPKGADRKQKTDREKMEKRTAHEKEKYQPSYDTTI) and 285-368 (EHEQ…QPSA). The span at 238–262 (KGADRKQKTDREKMEKRTAHEKEKY) shows a compositional bias: basic and acidic residues. The segment covering 320-368 (YVNNSPSPAPTFTSPQQSTCSVPDSNSSSPNHQGDGASQTSGEQIQPSA) has biased composition (polar residues). Ser-390 and Ser-393 each carry phosphoserine.

The protein belongs to the grh/CP2 family. CP2 subfamily. Interacts with TFCP2. Interacts with PIAS1, and is probably part of a complex containing TFCP2, UBP1 and PIAS1. As to expression, expressed in adrenal tissue, JEG-3, NCI-H295A, Hep-G2 and HeLa cell lines.

The protein localises to the nucleus. Its function is as follows. Functions as a transcriptional activator in a promoter context-dependent manner. Modulates the placental expression of CYP11A1. Involved in regulation of the alpha-globin gene in erythroid cells. Activation of the alpha-globin promoter in erythroid cells is via synergistic interaction with TFCP2. Involved in regulation of the alpha-globin gene in erythroid cells. Binds strongly to sequences around the HIV-1 initiation site and weakly over the TATA-box. Represses HIV-1 transcription by inhibiting the binding of TFIID to the TATA-box. The chain is Upstream-binding protein 1 (UBP1) from Homo sapiens (Human).